The following is an 85-amino-acid chain: uncharacterized protein (85 aa).

A run of 2 helical transmembrane segments spans residues 13 to 35 (KWLAVAICLAMVGMAVMPAFQPL) and 59 to 81 (EGIVITATLAAAAATAELVHLLL).

It localises to the cell membrane. This is an uncharacterized protein from Archaeoglobus fulgidus (strain ATCC 49558 / DSM 4304 / JCM 9628 / NBRC 100126 / VC-16).